The chain runs to 622 residues: Auxin efflux carrier component 1 (622 aa).

Topologically, residues 1-6 (MITAAD) are extracellular. A helical transmembrane segment spans residues 7-27 (FYHVMTAMVPLYVAMILAYGS). Topologically, residues 28–44 (VKWWKIFTPDQCSGINR) are cytoplasmic. The helical transmembrane segment at 45-65 (FVALFAVPLLSFHFIAANNPY) threads the bilayer. V51 is a (indol-3-yl)acetate binding site. The Extracellular portion of the chain corresponds to 66 to 70 (AMNLR). The chain crosses the membrane as a helical span at residues 71-91 (FLAADSLQKVIVLSLLFLWCK). Residues 92–100 (LSRNGSLDW) lie on the Cytoplasmic side of the membrane. Residues 101–121 (TITLFSLSTLPNTLVMGIPLL) traverse the membrane as a helical segment. The (indol-3-yl)acetate site is built by N112 and L114. Residues 122–131 (KGMYGNFSGD) are Extracellular-facing. The N-linked (GlcNAc...) asparagine glycan is linked to N127. The helical transmembrane segment at 132 to 152 (LMVQIVVLQCIIWYTLMLFLF) threads the bilayer. Y145 contacts (indol-3-yl)acetate. Topologically, residues 153 to 482 (EYRGAKLLIS…LIRNPNSYSS (330 aa)) are cytoplasmic. Residues S209, S212, S221, and S225 each carry the phosphoserine modification. Residues 213 to 233 (RSDIYSRRSQGLSATPRPSNL) are disordered. Residue T227 is modified to Phosphothreonine. Residue S231 is modified to Phosphoserine. T248 is modified (phosphothreonine). Phosphoserine is present on residues S252, S253, and S271. Positions 268-362 (GRNSNFGPGE…PVVGGKRQDG (95 aa)) are disordered. Residue T286 is modified to Phosphothreonine. S290 carries the phosphoserine modification. Residues 298–311 (PAKPTAAGTAAGAG) show a composition bias toward low complexity. Position 302 is a phosphothreonine (T302). Residues S317, S320, and S337 each carry the phosphoserine modification. Position 340 is a phosphothreonine (T340). Residues S374, S377, S408, S414, S426, S434, and S446 each carry the phosphoserine modification. Residues 483 to 503 (LFGITWSLISFKWNIEMPALI) traverse the membrane as a helical segment. Over 504 to 506 (AKS) the chain is Extracellular. Residues 507–527 (ISILSDAGLGMAMFSLGLFMA) form a helical membrane-spanning segment. The Cytoplasmic portion of the chain corresponds to 528-541 (LNPRIIACGNRRAA). Residues 542–562 (FAAAMRFVVGPAVMLVASYAV) form a helical membrane-spanning segment. Residues 563–566 (GLRG) lie on the Extracellular side of the membrane. A helical transmembrane segment spans residues 567-587 (VLLHVAIIQAALPQGIVPFVF). (indol-3-yl)acetate-binding residues include I582 and V583. Over 588–601 (AKEYNVHPDILSTA) the chain is Cytoplasmic. A helical transmembrane segment spans residues 602 to 622 (VIFGMLIALPITLLYYILLGL).

This sequence belongs to the auxin efflux carrier (TC 2.A.69.1) family. Homodimer. Interacts with TOPP4. Interacts with FYPP1 and FYPP3. Component of a complex made of PINs (e.g. PIN1 and PIN2), MAB4/MELs (e.g. NPY1/MAB4 and NPY5/MEL1) and AGC kinases (e.g. D6PK and PID) at the plasma membrane. Binds directly to NPY5/MEL1. In terms of tissue distribution, expressed at the basal side of elongated parenchymatous xylem cells.

The protein resides in the cell membrane. Auxin efflux carrier activity is competitively inhibited by naptalamate (N-1-naphthylphthalamic acid, NPA) but activated by D6PK-mediated phosphorylation. Its function is as follows. Acts as a component of the auxin efflux carrier; this activity is enhanced when activated by D6PK-mediated phosphorylation. Binds auxins including indole-3-acetic acid (IAA), indole-3-butyric acid (IBA), indole-3-propionic acid (IPA) and 4-chloroindole-3-acetic acid (4-Cl-IAA). Seems to be involved in the basipetal auxin transport. Mediates the formation of auxin gradient which is required to ensure correct organogenesis. Coordinated polar localization of PIN1 is directly regulated by the vesicle trafficking process and apical-basal PIN1 polarity also depends on the phosphorylation of conserved serine residues by PID kinase. The ARF-GEF protein GNOM is required for the correct recycling of PIN1 between the plasma membrane and endosomal compartments. Recrutes NPY proteins (e.g. NPY1/MAB4 and NPY5/MEL1) to the plasma membrane in a polar basal localization in root epidermis; this activity is optimized by AGC kinases-mediated (e.g. D6PK and PID) phosphorylation that limits their lateral diffusion-based escape. This Arabidopsis thaliana (Mouse-ear cress) protein is Auxin efflux carrier component 1.